The sequence spans 224 residues: Ribonuclease T (224 aa).

Acidic residues predominate over residues 1-11; that stretch reads MSEDLYEDDQD. A disordered region spans residues 1–20; that stretch reads MSEDLYEDDQDSQVSSGSRH. Residues 32-206 form the Exonuclease domain; the sequence is VVVDVETGGF…YDTEKTAELF (175 aa). Mg(2+) is bound by residues D35, E37, H193, and D198. H193 (proton donor/acceptor) is an active-site residue.

The protein belongs to the RNase T family. In terms of assembly, homodimer. Mg(2+) is required as a cofactor.

Functionally, trims short 3' overhangs of a variety of RNA species, leaving a one or two nucleotide 3' overhang. Responsible for the end-turnover of tRNA: specifically removes the terminal AMP residue from uncharged tRNA (tRNA-C-C-A). Also appears to be involved in tRNA biosynthesis. In Pseudomonas entomophila (strain L48), this protein is Ribonuclease T.